Consider the following 605-residue polypeptide: Ras guanine nucleotide exchange factor A (605 aa).

The region spanning 67-99 is the LisH domain; the sequence is DKTAIIQLILQHLSTKGLKQTKQTLEKEARTTT. In terms of domain architecture, N-terminal Ras-GEF spans 198–320; sequence DDEVVKFASL…SLTKMVEKLS (123 aa). Positions 353 to 597 constitute a Ras-GEF domain; it reads DEEEIARQLT…YRESLKREPK (245 aa).

As to quaternary structure, component of the Sca1 complex composed of at least gefA, gefH, scaA, phr, and the protein phosphatase 2A subunits pppA and pho2B. Interacts directly with gefH.

It is found in the cell membrane. Its function is as follows. Ras-bound GDP/GTP exchange factor required for normal activation of adenylyl cyclase. Component of the Sca1 complex, a regulator of cell motility, chemotaxis and signal relay. The Sca1 complex is recruited to the plasma membrane in a chemoattractant- and F-actin-dependent manner and is enriched at the leading edge of chemotaxing cells where it regulates F-actin dynamics and signal relay by controlling the activation of rasC and the downstream target of rapamycin complex 2 (TORC2)-Akt/protein kinase B (PKB) pathway. The sequence is that of Ras guanine nucleotide exchange factor A (gefA) from Dictyostelium discoideum (Social amoeba).